The sequence spans 161 residues: uncharacterized protein (161 aa).

A compositionally biased stretch (low complexity) spans 1-16 (MPRAGRAPAEGGPAPG). Disordered stretches follow at residues 1 to 23 (MPRA…SRCL), 50 to 91 (GRPV…TQSA), and 140 to 161 (RGPA…WRIS).

This is an uncharacterized protein from Homo sapiens (Human).